A 500-amino-acid polypeptide reads, in one-letter code: NAD(P)H-quinone oxidoreductase chain 4, chloroplastic (500 aa).

The next 14 membrane-spanning stretches (helical) occupy residues 4 to 24 (FPWLTIIVVFPILTGSLIFLL), 37 to 57 (LCICILELLLTTYTFCYHFQL), 87 to 107 (IGPILLTGFITTLATLAAWPV), 111 to 131 (AQLFHFLMLAMYSGQIGSFSS), 134 to 154 (LLLFFLMWEFELIPVYLLLSM), 167 to 187 (FILYTAGGSIFLLIGVLGIGL), 208 to 228 (ALEVIFYVGFLIAFAVKLPII), 242 to 262 (HYSTCMLLAGILLKMGAYGLV), 272 to 292 (AHCLFSPGLIIVGAIQIIYAA), 305 to 325 (IAYSSISHMGFIIIGIGSLSD), 330 to 350 (GAILQIISHGFIGAALFFLAG), 386 to 406 (LALPGLSGFVAELLVFFGIIT), 416 to 436 (ILIAFLMAIGMILTPIYSLSM), and 462 to 482 (LFVSISLLLPIIGIGIYPDFV).

This sequence belongs to the complex I subunit 4 family.

It localises to the plastid. The protein localises to the chloroplast thylakoid membrane. The enzyme catalyses a plastoquinone + NADH + (n+1) H(+)(in) = a plastoquinol + NAD(+) + n H(+)(out). It carries out the reaction a plastoquinone + NADPH + (n+1) H(+)(in) = a plastoquinol + NADP(+) + n H(+)(out). In Oenothera biennis (German evening primrose), this protein is NAD(P)H-quinone oxidoreductase chain 4, chloroplastic.